A 365-amino-acid chain; its full sequence is tRNA/tmRNA (uracil-C(5))-methyltransferase (365 aa).

S-adenosyl-L-methionine is bound by residues Q189, Y217, N222, E238, and D298. The active-site Nucleophile is the C323. E357 acts as the Proton acceptor in catalysis.

The protein belongs to the class I-like SAM-binding methyltransferase superfamily. RNA M5U methyltransferase family. TrmA subfamily.

It carries out the reaction uridine(54) in tRNA + S-adenosyl-L-methionine = 5-methyluridine(54) in tRNA + S-adenosyl-L-homocysteine + H(+). The catalysed reaction is uridine(341) in tmRNA + S-adenosyl-L-methionine = 5-methyluridine(341) in tmRNA + S-adenosyl-L-homocysteine + H(+). Its function is as follows. Dual-specificity methyltransferase that catalyzes the formation of 5-methyluridine at position 54 (m5U54) in all tRNAs, and that of position 341 (m5U341) in tmRNA (transfer-mRNA). This is tRNA/tmRNA (uracil-C(5))-methyltransferase from Shewanella sp. (strain ANA-3).